The sequence spans 811 residues: Mitochondrial intermediate peptidase (811 aa).

The transit peptide at 1–25 (MRSGSRLSNYLVRLSGRVSFTQKRS) directs the protein to the mitochondrion. A disordered region spans residues 423 to 450 (TENGEKASTDTSTSTTTSTTTTDSTTTT). The span at 431–450 (TDTSTSTTTSTTTTDSTTTT) shows a compositional bias: low complexity. Residue His593 coordinates Zn(2+). Glu594 is an active-site residue. Positions 597 and 600 each coordinate Zn(2+).

The protein belongs to the peptidase M3 family. Zn(2+) serves as cofactor.

It localises to the mitochondrion matrix. It catalyses the reaction Release of an N-terminal octapeptide as second stage of processing of some proteins imported into the mitochondrion.. Cleaves proteins, imported into the mitochondrion, to their mature size. While most mitochondrial precursor proteins are processed to the mature form in one step by mitochondrial processing peptidase (MPP), the sequential cleavage by MIP of an octapeptide after initial processing by MPP is a required step for a subgroup of nuclear-encoded precursor proteins destined for the matrix or the inner membrane. The polypeptide is Mitochondrial intermediate peptidase (OCT1) (Lodderomyces elongisporus (strain ATCC 11503 / CBS 2605 / JCM 1781 / NBRC 1676 / NRRL YB-4239) (Yeast)).